The chain runs to 1001 residues: Protein MEI2-like 4 (1001 aa).

The segment at 100–120 (HANLPPSPWRPDQETGRQTDS) is disordered. 2 RRM domains span residues 275–348 (RTLF…YSIP) and 360–433 (GTIV…TSRL). 2 disordered regions span residues 767 to 815 (GGPS…KKQY) and 941 to 1001 (FHSD…PAKD). Basic and acidic residues predominate over residues 793-803 (PGERMRSRRND). Residues 978–994 (DISITSVNCDTSTNGVD) are compositionally biased toward polar residues.

Probable RNA-binding protein that may play a role in growth regulation. This Oryza sativa subsp. japonica (Rice) protein is Protein MEI2-like 4 (ML4).